Here is a 497-residue protein sequence, read N- to C-terminus: Probable cytosol aminopeptidase (497 aa).

Positions 264 and 269 each coordinate Mn(2+). Lys276 is an active-site residue. Residues Asp287, Asp346, and Glu348 each coordinate Mn(2+). Residue Arg350 is part of the active site.

It belongs to the peptidase M17 family. Requires Mn(2+) as cofactor.

It localises to the cytoplasm. The enzyme catalyses Release of an N-terminal amino acid, Xaa-|-Yaa-, in which Xaa is preferably Leu, but may be other amino acids including Pro although not Arg or Lys, and Yaa may be Pro. Amino acid amides and methyl esters are also readily hydrolyzed, but rates on arylamides are exceedingly low.. It carries out the reaction Release of an N-terminal amino acid, preferentially leucine, but not glutamic or aspartic acids.. Presumably involved in the processing and regular turnover of intracellular proteins. Catalyzes the removal of unsubstituted N-terminal amino acids from various peptides. This Persephonella marina (strain DSM 14350 / EX-H1) protein is Probable cytosol aminopeptidase.